The following is a 192-amino-acid chain: uncharacterized protein (192 aa).

This is an uncharacterized protein from Picosynechococcus sp. (strain ATCC 27264 / PCC 7002 / PR-6) (Agmenellum quadruplicatum).